The sequence spans 287 residues: Phospholipase A and acyltransferase 5 (287 aa).

2 disordered regions span residues 48 to 72 (PKQI…ASSQ) and 86 to 138 (DRGL…SNQK). Composition is skewed to polar residues over residues 49–72 (KQIS…ASSQ) and 128–138 (LKNQAAESNQK). In terms of domain architecture, LRAT spans 144–257 (LIEIFRIGYE…LRYGVPRSQQ (114 aa)). Catalysis depends on residues His-154 and His-166. The active-site Acyl-thioester intermediate is the Cys-241.

Belongs to the H-rev107 family. In terms of tissue distribution, expressed in testis.

The protein localises to the cytoplasm. It localises to the cytosol. The catalysed reaction is a 1,2-diacyl-sn-glycero-3-phosphocholine + H2O = a 1-acyl-sn-glycero-3-phosphocholine + a fatty acid + H(+). The enzyme catalyses a 1,2-diacyl-sn-glycero-3-phosphocholine + H2O = a 2-acyl-sn-glycero-3-phosphocholine + a fatty acid + H(+). It carries out the reaction 1-hexadecanoyl-2-(5Z,8Z,11Z,14Z-eicosatetraenoyl)-sn-glycero-3-phosphocholine + 1,2-di-(9Z-octadecenoyl)-sn-glycero-3-phosphoethanolamine = N-(5Z,8Z,11Z,14Z-eicosatetraenoyl)-1,2-di-(9Z-octadecenoyl)-sn-glycero-3-phosphoethanolamine + 1-hexadecanoyl-sn-glycero-3-phosphocholine + H(+). It catalyses the reaction 1,2-di-(9Z-octadecenoyl)-sn-glycero-3-phosphoethanolamine + 1,2-dihexadecanoyl-sn-glycero-3-phosphocholine = N-hexadecanoyl-1,2-di-(9Z-octadecenoyl)-sn-glycero-3-phosphoethanolamine + 1-hexadecanoyl-sn-glycero-3-phosphocholine + H(+). The catalysed reaction is 1,2-di-(9Z-octadecenoyl)-sn-glycero-3-phosphoethanolamine + 1,2-dihexadecanoyl-sn-glycero-3-phosphocholine = N-hexadecanoyl-1,2-di-(9Z-octadecenoyl)-sn-glycero-3-phosphoethanolamine + 2-hexadecanoyl-sn-glycero-3-phosphocholine + H(+). The enzyme catalyses a 1,2-diacyl-sn-glycero-3-phosphoethanolamine + a 1,2-diacyl-sn-glycero-3-phosphocholine = an N-acyl-1,2-diacyl-sn-glycero-3-phosphoethanolamine + a 1-acyl-sn-glycero-3-phosphocholine + H(+). It carries out the reaction a 1,2-diacyl-sn-glycero-3-phosphoethanolamine + a 1,2-diacyl-sn-glycero-3-phosphocholine = an N-acyl-1,2-diacyl-sn-glycero-3-phosphoethanolamine + a 2-acyl-sn-glycero-3-phosphocholine + H(+). It catalyses the reaction 1-hexadecanoyl-2-(9Z-octadecenoyl)-sn-glycero-3-phosphocholine + 1,2-di-(9Z-octadecenoyl)-sn-glycero-3-phosphoethanolamine = N,1,2-tri-(9Z-octadecenoyl)-sn-glycero-3-phosphoethanolamine + 1-hexadecanoyl-sn-glycero-3-phosphocholine + H(+). Functionally, exhibits both phospholipase A1/2 and acyltransferase activities. Shows phospholipase A1 (PLA1) and A2 (PLA2) activity, catalyzing the calcium-independent release of fatty acids from the sn-1 or sn-2 position of glycerophospholipids. Shows N-acyltransferase activity, catalyzing the calcium-independent transfer of a fatty acyl group at the sn-1 position of phosphatidylcholine (PC) and other glycerophospholipids to the primary amine of phosphatidylethanolamine (PE), forming N-acylphosphatidylethanolamine (NAPE), which serves as precursor for N-acylethanolamines (NAEs). The sequence is that of Phospholipase A and acyltransferase 5 from Rattus norvegicus (Rat).